The following is a 475-amino-acid chain: Ankyrin repeat, SAM and basic leucine zipper domain-containing protein 1 (475 aa).

Residues 1–24 (MAAGTVRGLAVAGGGESSESEDDG) are disordered. S17, S18, and S20 each carry phosphoserine. 6 ANK repeats span residues 45–74 (EKNETFKKALTTGDISLVQELLDSGLSVDS), 78–107 (YGWTPLMYAASVSNVELVRVLLDRGANASF), 110–144 (DKQTILITACSARGSEEQILKCVELLLSRNADPNV), 148–177 (RLMTPIMYAARDGHPQVVALLVAHGAEVNA), 181–210 (NGYTALTWAARQGHKNVVLKLLELGANKML), and 214–243 (DGKTPSEIAKRNKHLEIFNFLSLTLNPLEG). The 63-residue stretch at 272-334 (SYTAFGDLEI…KILAALKELE (63 aa)) folds into the SAM domain.

As to quaternary structure, interacts with DDX4, PIWIL1, RANBP9 and TDRD1.

It is found in the cytoplasm. Functionally, plays a central role during spermatogenesis by repressing transposable elements and preventing their mobilization, which is essential for the germline integrity. Acts via the piRNA metabolic process, which mediates the repression of transposable elements during meiosis by forming complexes composed of piRNAs and Piwi proteins and governs the methylation and subsequent repression of transposons. Its association with pi-bodies suggests a participation in the primary piRNAs metabolic process. Required prior to the pachytene stage to facilitate the production of multiple types of piRNAs, including those associated with repeats involved in the regulation of retrotransposons. May act by mediating protein-protein interactions during germ cell maturation. This Neofelis nebulosa (Clouded leopard) protein is Ankyrin repeat, SAM and basic leucine zipper domain-containing protein 1 (ASZ1).